Here is a 226-residue protein sequence, read N- to C-terminus: Ribosome maturation factor RimP (226 aa).

Residues Val190–Asp226 are disordered. The segment covering Gly204–Ala215 has biased composition (basic residues).

The protein belongs to the RimP family.

It is found in the cytoplasm. Its function is as follows. Required for maturation of 30S ribosomal subunits. In Nitratidesulfovibrio vulgaris (strain DSM 19637 / Miyazaki F) (Desulfovibrio vulgaris), this protein is Ribosome maturation factor RimP.